The primary structure comprises 880 residues: Interference hedgehog (880 aa).

The N-terminal stretch at 1-20 is a signal peptide; that stretch reads MTLLTSSLLLFSLLTSRLEA. The Extracellular portion of the chain corresponds to 21 to 703; that stretch reads IPVLEKSPAH…ETFNMSPMLT (683 aa). 4 consecutive Ig-like C2-type domains span residues 45 to 142, 155 to 232, 252 to 340, and 346 to 432; these read PGVR…TARL, PESP…ERIQ, PHLL…YIKV, and PQIV…LQVN. Disulfide bonds link Cys68–Cys126, Cys173–Cys220, Cys276–Cys324, and Cys367–Cys414. 2 N-linked (GlcNAc...) asparagine glycosylation sites follow: Asn102 and Asn209. The disordered stretch occupies residues 429 to 467; it reads LQVNPKQIQEPRESGGTHRPNPNQGSKHKQMYPPTPPNV. Fibronectin type-III domains follow at residues 461–567 and 575–670; these read PPTP…LQPG and VPEL…TQRP. An N-linked (GlcNAc...) asparagine glycan is attached at Asn466. Residues Arg497, Lys501, Lys503, and Arg541 each coordinate heparin. An N-linked (GlcNAc...) asparagine glycan is attached at Asn557. The segment at 662-692 is disordered; the sequence is LKQGRTQRPKTSTTEEPTLQMGDRDTTTPSH. The span at 665–678 shows a compositional bias: polar residues; that stretch reads GRTQRPKTSTTEEP. An N-linked (GlcNAc...) asparagine glycan is attached at Asn693. The helical transmembrane segment at 704-724 threads the bilayer; that stretch reads GTIGGGAVLILLLISTCLCVC. Residues 725–880 are Cytoplasmic-facing; the sequence is RRRNSRSRGN…SSGSLNSVGV (156 aa). Disordered regions lie at residues 728–762 and 775–880; these read NSRS…QRQR and QQQQ…SVGV. Low complexity-rich tracts occupy residues 823–837 and 864–880; these read RAGG…NNNN and SSRS…SVGV.

This sequence belongs to the immunoglobulin superfamily. IHOG family. In terms of assembly, homodimer. Heterotetramer; 2 iHog chains bind 2 hh chains when facilitated by heparin, heparin is required to promote high-affinity interactions between hh and iHog.

It is found in the membrane. Functionally, mediates response to the active Hedgehog (Hh) protein signal in embryos, functioning upstream or at the level of patched (ptc). The chain is Interference hedgehog from Drosophila simulans (Fruit fly).